A 515-amino-acid chain; its full sequence is Maturase K (515 aa).

Belongs to the intron maturase 2 family. MatK subfamily.

It is found in the plastid. The protein localises to the chloroplast. Usually encoded in the trnK tRNA gene intron. Probably assists in splicing its own and other chloroplast group II introns. This is Maturase K from Picea mariana (Black spruce).